The primary structure comprises 718 residues: Exostosin-2 (718 aa).

The Cytoplasmic portion of the chain corresponds to 1–25; it reads MCASVKYNIRGPALIPRMKTKHRIY. A helical; Signal-anchor for type II membrane protein membrane pass occupies residues 26–46; sequence YITLFSIVLLGLIATGMFQFW. The Lumenal portion of the chain corresponds to 47 to 718; it reads PHSIESSGDW…LKSFPNIGSL (672 aa). 4 disulfides stabilise this stretch: C85–C90, C96–C151, C286–C300, and C318–C339. An N-linked (GlcNAc...) asparagine glycan is attached at N288. Residues L461, R465, N490, and N517 each contribute to the UDP site. 7 residues coordinate UDP-N-acetyl-alpha-D-glucosamine: R465, N490, N517, R522, D538, D539, and D540. Positions 538 and 539 each coordinate UDP. Residue D540 coordinates Mn(2+). A protein is bound by residues Y582 and S584. C626 and C676 form a disulfide bridge. UDP-N-acetyl-alpha-D-glucosamine contacts are provided by E627 and D628. An N-linked (GlcNAc...) asparagine glycan is attached at N637. A protein-binding residues include K651 and K653. R673 is a binding site for UDP-N-acetyl-alpha-D-glucosamine.

It belongs to the glycosyltransferase 47 family. As to quaternary structure, part of the heparan sulfate polymerase, a dimeric complex composed of EXT1 and EXT2. Could also form homooligomeric complexes. Interacts with NDST1. Interacts with GALNT5. The cofactor is Mn(2+). In terms of processing, a soluble form is generated by proteolytic processing. N-glycosylated at Asn-637.

Its subcellular location is the golgi apparatus membrane. The protein resides in the golgi apparatus. The protein localises to the cis-Golgi network membrane. It is found in the endoplasmic reticulum membrane. It localises to the secreted. It catalyses the reaction 3-O-{[(1-&gt;4)-beta-D-GlcA-(1-&gt;4)-alpha-D-GlcNAc](n)-(1-&gt;4)-beta-D-GlcA-(1-&gt;3)-beta-D-Gal-(1-&gt;3)-beta-D-Gal-(1-&gt;4)-beta-D-Xyl}-L-seryl-[protein] + UDP-N-acetyl-alpha-D-glucosamine = 3-O-{alpha-D-GlcNAc-[(1-&gt;4)-beta-D-GlcA-(1-&gt;4)-alpha-D-GlcNAc](n)-(1-&gt;4)-beta-D-GlcA-(1-&gt;3)-beta-D-Gal-(1-&gt;3)-beta-D-Gal-(1-&gt;4)-beta-D-Xyl}-L-seryl-[protein] + UDP + H(+). It participates in protein modification; protein glycosylation. Functionally, glycosyltransferase forming with EXT1 the heterodimeric heparan sulfate polymerase which catalyzes the elongation of the heparan sulfate glycan backbone. Glycan backbone extension consists in the alternating transfer of (1-&gt;4)-beta-D-GlcA and (1-&gt;4)-alpha-D-GlcNAc residues from their respective UDP-sugar donors. Both EXT1 and EXT2 are required for the full activity of the polymerase since EXT1 bears the N-acetylglucosaminyl-proteoglycan 4-beta-glucuronosyltransferase activity within the complex while EXT2 carries the glucuronosyl-N-acetylglucosaminyl-proteoglycan 4-alpha-N-acetylglucosaminyltransferase activity. Heparan sulfate proteoglycans are ubiquitous components of the extracellular matrix and play an important role in tissue homeostasis and signaling. This is Exostosin-2 from Bos taurus (Bovine).